The following is a 324-amino-acid chain: Galactosylgalactosylxylosylprotein 3-beta-glucuronosyltransferase 2 (324 aa).

The Cytoplasmic portion of the chain corresponds to 1-2 (MK). A helical; Signal-anchor for type II membrane protein membrane pass occupies residues 3–23 (SALCNRFFILLPWILIVIIML). Residues 24-324 (DVDPRRPAPQ…YHMDTVNIEV (301 aa)) lie on the Lumenal side of the membrane. Residues 34–78 (LTSRPYFSPHTVGCGGSRVPLRRSSPGRDAAEKRNESRPQLQPEP) are disordered. Asn68 carries an N-linked (GlcNAc...) asparagine glycan. Asp188 is a binding site for Mn(2+). The active-site Proton acceptor is Glu274. The N-linked (GlcNAc...) asparagine glycan is linked to Asn293.

It belongs to the glycosyltransferase 43 family. In terms of assembly, homodimer. It depends on Mn(2+) as a cofactor. Expressed in the cerebral cortex, cerebellum and whole brain.

Its subcellular location is the golgi apparatus membrane. It catalyses the reaction 3-O-(beta-D-galactosyl-(1-&gt;3)-beta-D-galactosyl-(1-&gt;4)-beta-D-xylosyl)-L-seryl-[protein] + UDP-alpha-D-glucuronate = 3-O-(beta-D-GlcA-(1-&gt;3)-beta-D-Gal-(1-&gt;3)-beta-D-Gal-(1-&gt;4)-beta-D-Xyl)-L-seryl-[protein] + UDP + H(+). It participates in protein modification; protein glycosylation. Its function is as follows. Involved in the biosynthesis of L2/HNK-1 carbohydrate epitope on both glycolipids and glycoproteins. Substrates include asialo-orosomucoid (ASOR), paragloboside (lacto-N-neotetraosylceramide), Gal-beta-1,4-GlcNAc-beta-1,3-Gal-beta-1,4-Glc-pyridylamine and Gal-beta-1,3-GlcNAc-beta-1,3-Gal-beta-1,4-Glc-pyridylamine. In Rattus norvegicus (Rat), this protein is Galactosylgalactosylxylosylprotein 3-beta-glucuronosyltransferase 2 (B3gat2).